The chain runs to 356 residues: UDP-N-acetylglucosamine--N-acetylmuramyl-(pentapeptide) pyrophosphoryl-undecaprenol N-acetylglucosamine transferase (356 aa).

Residues 11–13 (TAG), Asn123, Arg159, and Ser192 each bind UDP-N-acetyl-alpha-D-glucosamine.

Belongs to the glycosyltransferase 28 family. MurG subfamily.

Its subcellular location is the cell membrane. It catalyses the reaction di-trans,octa-cis-undecaprenyl diphospho-N-acetyl-alpha-D-muramoyl-L-alanyl-D-glutamyl-meso-2,6-diaminopimeloyl-D-alanyl-D-alanine + UDP-N-acetyl-alpha-D-glucosamine = di-trans,octa-cis-undecaprenyl diphospho-[N-acetyl-alpha-D-glucosaminyl-(1-&gt;4)]-N-acetyl-alpha-D-muramoyl-L-alanyl-D-glutamyl-meso-2,6-diaminopimeloyl-D-alanyl-D-alanine + UDP + H(+). Its pathway is cell wall biogenesis; peptidoglycan biosynthesis. Cell wall formation. Catalyzes the transfer of a GlcNAc subunit on undecaprenyl-pyrophosphoryl-MurNAc-pentapeptide (lipid intermediate I) to form undecaprenyl-pyrophosphoryl-MurNAc-(pentapeptide)GlcNAc (lipid intermediate II). The protein is UDP-N-acetylglucosamine--N-acetylmuramyl-(pentapeptide) pyrophosphoryl-undecaprenol N-acetylglucosamine transferase of Tropheryma whipplei (strain Twist) (Whipple's bacillus).